A 474-amino-acid chain; its full sequence is Glutamine synthetase (474 aa).

In terms of domain architecture, GS beta-grasp spans 15-99 (EDVQFIDVRF…MTFFIHDPIT (85 aa)). The GS catalytic domain maps to 107–474 (PRNIAKKAET…PYEFTLYYDI (368 aa)). Mg(2+) is bound by residues glutamate 132 and glutamate 134. An ATP-binding site is contributed by glutamate 210. Mg(2+) is bound by residues glutamate 215 and glutamate 223. Residues 267–268 (NG) and glycine 268 each bind L-glutamate. Histidine 272 is a binding site for Mg(2+). ATP is bound by residues 274–276 (HSS) and serine 276. L-glutamate is bound by residues arginine 325, glutamate 331, and arginine 343. Residues arginine 343, arginine 348, and lysine 357 each contribute to the ATP site. Glutamate 362 is a binding site for Mg(2+). L-glutamate is bound at residue arginine 364. Position 402 is an O-AMP-tyrosine (tyrosine 402).

It belongs to the glutamine synthetase family. As to quaternary structure, oligomer of 12 subunits arranged in the form of two hexagons. Mg(2+) serves as cofactor.

It is found in the cytoplasm. The catalysed reaction is L-glutamate + NH4(+) + ATP = L-glutamine + ADP + phosphate + H(+). The activity of this enzyme could be controlled by adenylation under conditions of abundant glutamine. Functionally, catalyzes the ATP-dependent biosynthesis of glutamine from glutamate and ammonia. The polypeptide is Glutamine synthetase (Frankia alni).